Consider the following 236-residue polypeptide: Protein INCA1 (236 aa).

Position 23 is a phosphoserine (serine 23). The segment at 75-99 (GLYPPEQLPPPEMLWRRKKRRPCLE) is interaction with CCNA1 and CCNA1/CDK2 complex; essential for CDK2 inhibitory activity. A Nuclear localization signal motif is present at residues 90-95 (RRKKRR). Threonine 182 bears the Phosphothreonine mark. Residues serine 191 and serine 194 each carry the phosphoserine modification.

Belongs to the INCA family. Interacts with CCNA1. Interacts with CCNA2, CCNB1 and CCNE1. Found in a complex with CCNA1 and CDK2. Interacts with ZNF16; the interaction inhibits INCA1 activity and induces the cell cycle process. Interacts with SPACA9. Interacts with the CCNA1/CDK2 complex. Interacts with ING5, DAZAP2, RNF26, USP15, SPOUT1, DPH7, TRIM26 and RAB5C. Phosphorylated when part of a complex with CCNA1 and CDK2. Strongly phosphorylated by CDK2 on its C-terminal region spanning amino acid 149-221. Less intensively phosphorylated by CDK2 on its first 75 amino acid residues. In terms of tissue distribution, detected in testis, and at lower levels in ovary. Detected at very low levels in testis tumors. Down-regulated in bone marrow cells in acute myeloid and lymphoid leukemia patients as compared with normal bone marrow cells.

The protein localises to the nucleus. The protein resides in the cytoplasm. Binds to CDK2-bound cyclins and inhibits the kinase activity of CDK2; binding to cyclins is critical for its function as CDK inhibitor. Inhibits cell growth and cell proliferation and may play a role in cell cycle control. Required for ING5-mediated regulation of S-phase progression, enhancement of Fas-induced apoptosis and inhibition of cell growth. This is Protein INCA1 (INCA1) from Homo sapiens (Human).